The primary structure comprises 308 residues: Ribosome maturation factor RimP (308 aa).

Disordered regions lie at residues 1–31 (MARAGESGRAGVRRSTAPSRRTGGARAAADA), 94–113 (EDIGTDGAGGTGGSGGAAGG), and 249–308 (DLDE…EMNR). The span at 17–31 (APSRRTGGARAAADA) shows a compositional bias: low complexity. The segment covering 99 to 113 (DGAGGTGGSGGAAGG) has biased composition (gly residues). Acidic residues predominate over residues 249-269 (DLDEGLEDDDGLEDEDDEDEY).

This sequence belongs to the RimP family.

Its subcellular location is the cytoplasm. Required for maturation of 30S ribosomal subunits. The polypeptide is Ribosome maturation factor RimP (Parafrankia sp. (strain EAN1pec)).